A 207-amino-acid polypeptide reads, in one-letter code: HTH-type transcriptional regulator BetI 2 (207 aa).

Residues 8–68 (PIRRQQLIKA…ATMRQILTDL (61 aa)) enclose the HTH tetR-type domain. The segment at residues 31–50 (TVMRIARHAGVSAGIISHYF) is a DNA-binding region (H-T-H motif).

Its pathway is amine and polyamine biosynthesis; betaine biosynthesis via choline pathway [regulation]. In terms of biological role, repressor involved in the biosynthesis of the osmoprotectant glycine betaine. It represses transcription of the choline transporter BetT and the genes of BetAB involved in the synthesis of glycine betaine. This chain is HTH-type transcriptional regulator BetI 2, found in Chromohalobacter salexigens (strain ATCC BAA-138 / DSM 3043 / CIP 106854 / NCIMB 13768 / 1H11).